The following is a 489-amino-acid chain: Dentin matrix acidic phosphoprotein 1 (489 aa).

The first 16 residues, 1–16, serve as a signal peptide directing secretion; it reads MKTVILLTFLWGLSCA. The segment at 22–489 is disordered; sequence YQNTESESSE…QDDNDCQDGY (468 aa). Positions 82 to 100 are enriched in acidic residues; it reads DKEEDEDDSGDDTFGDEDN. The span at 123–138 shows a compositional bias: low complexity; sequence DTTQSSEDSTSQENSA. 2 stretches are compositionally biased toward basic and acidic residues: residues 143 to 159 and 217 to 227; these read SDSKDHHSDEADSRPEA and RSEESKGDHEP. A compositionally biased stretch (polar residues) spans 263 to 274; that stretch reads DSNSRETQSVST. Residues 275-287 are compositionally biased toward basic and acidic residues; sequence EDFRSKEESRSET. Low complexity predominate over residues 316-332; it reads EPSQESSSESQEGVASE. Residues 334 to 336 carry the Cell attachment site motif; sequence RGD. A glycan (N-linked (GlcNAc...) asparagine) is linked at asparagine 340. A compositionally biased stretch (basic and acidic residues) spans 346–358; it reads DQRDSESSEEDRL. The N-linked (GlcNAc...) asparagine glycan is linked to asparagine 378. Over residues 386-397 the composition is skewed to acidic residues; it reads ESQESAQDEDSS. Residues 398–419 are compositionally biased toward low complexity; the sequence is SQEGLQSQSASRESRSQESQSE. Basic and acidic residues predominate over residues 420–442; it reads QDSRSEENRDSDSQDSSRSKEES. Asparagine 443 is a glycosylation site (N-linked (GlcNAc...) asparagine). Over residues 453–478 the composition is skewed to basic and acidic residues; the sequence is EDNHPKNIEADNRKLIVDAYHNKPIG. A compositionally biased stretch (acidic residues) spans 479 to 489; it reads DQDDNDCQDGY.

Interacts with importin alpha. Post-translationally, phosphorylated in the cytosol and extracellular matrix and unphosphorylated in the nucleus. Phosphorylation is necessary for nucleocytoplasmic transport and may be catalyzed by a nuclear isoform of CK2 and can be augmented by calcium. Phosphorylated (in vitro) by FAM20C in the extracellular medium at sites within the S-x-E/pS motif. In terms of tissue distribution, expressed in tooth particularly in odontoblast and ameloblast.

The protein localises to the nucleus. It localises to the cytoplasm. It is found in the secreted. The protein resides in the extracellular space. Its subcellular location is the extracellular matrix. May have a dual function during osteoblast differentiation. In the nucleus of undifferentiated osteoblasts, unphosphorylated form acts as a transcriptional component for activation of osteoblast-specific genes like osteocalcin. During the osteoblast to osteocyte transition phase it is phosphorylated and exported into the extracellular matrix, where it regulates nucleation of hydroxyapatite. In Rattus norvegicus (Rat), this protein is Dentin matrix acidic phosphoprotein 1 (Dmp1).